We begin with the raw amino-acid sequence, 156 residues long: ATP synthase subunit b (156 aa).

The chain crosses the membrane as a helical span at residues 11-31 (AIAFILFVWFCMKYVWPPLMA).

The protein belongs to the ATPase B chain family. In terms of assembly, F-type ATPases have 2 components, F(1) - the catalytic core - and F(0) - the membrane proton channel. F(1) has five subunits: alpha(3), beta(3), gamma(1), delta(1), epsilon(1). F(0) has three main subunits: a(1), b(2) and c(10-14). The alpha and beta chains form an alternating ring which encloses part of the gamma chain. F(1) is attached to F(0) by a central stalk formed by the gamma and epsilon chains, while a peripheral stalk is formed by the delta and b chains.

It localises to the cell inner membrane. Functionally, f(1)F(0) ATP synthase produces ATP from ADP in the presence of a proton or sodium gradient. F-type ATPases consist of two structural domains, F(1) containing the extramembraneous catalytic core and F(0) containing the membrane proton channel, linked together by a central stalk and a peripheral stalk. During catalysis, ATP synthesis in the catalytic domain of F(1) is coupled via a rotary mechanism of the central stalk subunits to proton translocation. In terms of biological role, component of the F(0) channel, it forms part of the peripheral stalk, linking F(1) to F(0). The sequence is that of ATP synthase subunit b from Salmonella gallinarum (strain 287/91 / NCTC 13346).